A 236-amino-acid chain; its full sequence is MTRRYWNINLEEMMEAGVHFGHGTRKWNPRMAPYISAKRKGIHIINLTRTARFLSEACDLVFDAASRGKHFLIVGTKNKAADLIASAARKARCHYVNKKWLGGMSTNWSTTETRLQKFRDLRAEQKTGRFNHLPKRDAAMFKRQLSHLQTYLGGIKYMTGLPDIVIIVDQQEEYTALRECVTLGIPTICLIDTNSDPDLADISIPANDDAIASIRLILNKLVFAICEGRSSYIRNR.

The protein belongs to the universal ribosomal protein uS2 family.

It localises to the plastid. It is found in the chloroplast. The protein is Small ribosomal subunit protein uS2c (rps2) of Ceratophyllum demersum (Rigid hornwort).